The sequence spans 224 residues: Small ribosomal subunit protein uS3 (224 aa).

The region spanning 38-106 (LREFVKEKLG…EVYLNVVEVR (69 aa)) is the KH type-2 domain.

The protein belongs to the universal ribosomal protein uS3 family. Part of the 30S ribosomal subunit. Forms a tight complex with proteins S10 and S14.

Binds the lower part of the 30S subunit head. Binds mRNA in the 70S ribosome, positioning it for translation. This chain is Small ribosomal subunit protein uS3, found in Anaeromyxobacter dehalogenans (strain 2CP-C).